A 57-amino-acid chain; its full sequence is Zinc finger protein MJ0458.1 (57 aa).

Short sequence motifs (c(P)XCG motif) lie at residues 8-12, 26-30, 37-41, and 49-53; these read CISCN, CPNCG, CERCR, and CPKCG. Residues Cys26 and Cys29 each coordinate Zn(2+). Zn(2+)-binding residues include Cys49 and Cys52.

Monomer in solution.

Functionally, zinc-binding protein that binds only one zinc ion. In Methanocaldococcus jannaschii (strain ATCC 43067 / DSM 2661 / JAL-1 / JCM 10045 / NBRC 100440) (Methanococcus jannaschii), this protein is Zinc finger protein MJ0458.1.